Consider the following 144-residue polypeptide: Large ribosomal subunit protein uL15 (144 aa).

Residues 1 to 54 (MRLNTLSPAEGSKKAGKRLGRGIGSGLGKTGGRGHKGQKSRSGGGVRRGFEGGQ) are disordered. Positions 21–31 (RGIGSGLGKTG) are enriched in gly residues.

It belongs to the universal ribosomal protein uL15 family. In terms of assembly, part of the 50S ribosomal subunit.

Binds to the 23S rRNA. The polypeptide is Large ribosomal subunit protein uL15 (Salmonella enteritidis PT4 (strain P125109)).